Consider the following 924-residue polypeptide: Periplasmic nitrate reductase (924 aa).

The tat-type signal signal peptide spans Met1–Ala29. The 4Fe-4S Mo/W bis-MGD-type domain occupies Trp35–Asp91. Residues Cys42, Cys45, Cys49, and Cys77 each coordinate [4Fe-4S] cluster. Residues Lys79, Gln147, Asn172, Cys176, Trp209–Met216, Met417, Gln421, Asn527, Ser552–Asp553, Lys575, Asp602, and Thr814–Ser823 contribute to the Mo-bis(molybdopterin guanine dinucleotide) site. Trp890 provides a ligand contact to substrate. Residues Asn898 and Lys915 each contribute to the Mo-bis(molybdopterin guanine dinucleotide) site.

The protein belongs to the prokaryotic molybdopterin-containing oxidoreductase family. NasA/NapA/NarB subfamily. Component of the periplasmic nitrate reductase NapAB complex composed of NapA and NapB. [4Fe-4S] cluster is required as a cofactor. It depends on Mo-bis(molybdopterin guanine dinucleotide) as a cofactor. Post-translationally, predicted to be exported by the Tat system. The position of the signal peptide cleavage has not been experimentally proven.

It is found in the periplasm. The catalysed reaction is 2 Fe(II)-[cytochrome] + nitrate + 2 H(+) = 2 Fe(III)-[cytochrome] + nitrite + H2O. In terms of biological role, catalytic subunit of the periplasmic nitrate reductase complex NapAB. Receives electrons from NapB and catalyzes the reduction of nitrate to nitrite. The chain is Periplasmic nitrate reductase from Campylobacter lari (strain RM2100 / D67 / ATCC BAA-1060).